The chain runs to 43 residues: Protein PsbN (43 aa).

Residues 4–24 (GILIVIFISCLLVSFTGYAVY) traverse the membrane as a helical segment.

It belongs to the PsbN family.

Its subcellular location is the plastid. It localises to the chloroplast thylakoid membrane. May play a role in photosystem I and II biogenesis. The chain is Protein PsbN from Coleochaete orbicularis (Charophycean green alga).